The following is a 211-amino-acid chain: Large ribosomal subunit protein uL4 (211 aa).

Residues 42–73 are disordered; that stretch reads NNRQGTHSTKDRSEVRGGGIKPWAQKGTGRAR.

It belongs to the universal ribosomal protein uL4 family. Part of the 50S ribosomal subunit.

Its function is as follows. One of the primary rRNA binding proteins, this protein initially binds near the 5'-end of the 23S rRNA. It is important during the early stages of 50S assembly. It makes multiple contacts with different domains of the 23S rRNA in the assembled 50S subunit and ribosome. Forms part of the polypeptide exit tunnel. The polypeptide is Large ribosomal subunit protein uL4 (Leptospira biflexa serovar Patoc (strain Patoc 1 / Ames)).